The following is a 379-amino-acid chain: Homoserine O-succinyltransferase (379 aa).

The region spanning 51–360 (NAVLICHALS…DAPQGHDAFL (310 aa)) is the AB hydrolase-1 domain. Ser157 (nucleophile) is an active-site residue. Arg227 lines the substrate pocket. Catalysis depends on residues Asp323 and His356. Substrate is bound at residue Asp357.

This sequence belongs to the AB hydrolase superfamily. MetX family. In terms of assembly, homodimer.

It localises to the cytoplasm. The enzyme catalyses L-homoserine + succinyl-CoA = O-succinyl-L-homoserine + CoA. Its pathway is amino-acid biosynthesis; L-methionine biosynthesis via de novo pathway; O-succinyl-L-homoserine from L-homoserine: step 1/1. Its function is as follows. Transfers a succinyl group from succinyl-CoA to L-homoserine, forming succinyl-L-homoserine. The sequence is that of Homoserine O-succinyltransferase from Pseudomonas fluorescens (strain SBW25).